A 358-amino-acid polypeptide reads, in one-letter code: Molybdenum import ATP-binding protein ModC 2 (358 aa).

The 234-residue stretch at 1–234 (MPEQGIEAQL…PRLPLNHPDE (234 aa)) folds into the ABC transporter domain. Residue 35–42 (GRSGSGKT) participates in ATP binding. The 66-residue stretch at 293–358 (NSSILNILRV…AQIKSVALME (66 aa)) folds into the Mop domain.

The protein belongs to the ABC transporter superfamily. Molybdate importer (TC 3.A.1.8) family. The complex is composed of two ATP-binding proteins (ModC), two transmembrane proteins (ModB) and a solute-binding protein (ModA).

It is found in the cell inner membrane. It catalyses the reaction molybdate(out) + ATP + H2O = molybdate(in) + ADP + phosphate + H(+). Functionally, part of the ABC transporter complex ModABC involved in molybdenum import. Responsible for energy coupling to the transport system. The protein is Molybdenum import ATP-binding protein ModC 2 of Azotobacter vinelandii.